Consider the following 103-residue polypeptide: Small ribosomal subunit protein uS10 (103 aa).

Belongs to the universal ribosomal protein uS10 family. As to quaternary structure, part of the 30S ribosomal subunit.

Its function is as follows. Involved in the binding of tRNA to the ribosomes. The chain is Small ribosomal subunit protein uS10 from Neisseria gonorrhoeae.